The sequence spans 286 residues: CDP-diacylglycerol--serine O-phosphatidyltransferase (286 aa).

The next 5 helical transmembrane spans lie at 15–35, 95–115, 135–155, 167–187, and 207–227; these read ILPS…IKFA, MLSK…CVVL, EFFV…LLAL, VWFL…GIPM, and LAIC…VIII.

This sequence belongs to the CDP-alcohol phosphatidyltransferase class-I family.

It is found in the cell membrane. It catalyses the reaction a CDP-1,2-diacyl-sn-glycerol + L-serine = a 1,2-diacyl-sn-glycero-3-phospho-L-serine + CMP + H(+). The sequence is that of CDP-diacylglycerol--serine O-phosphatidyltransferase (pssA) from Mycobacterium bovis (strain ATCC BAA-935 / AF2122/97).